The chain runs to 339 residues: MGTRQTKGSLAERASPGAAPGPRRERPDFWASLLLRAGDKAGRAGSGLPPYHRRVGMVQELLRMVRQGRREEAGTLLQHLRQDLGMESTSLDDVLYRYASFRNLVDPITHDLIISLARYIHCPKPEGDAMGAMEKLCRQLTYHLSPHSQWRRHRGLKRKPQACLKALLSGNPPDNMVDLSGIPLTSRDLERVTSYLQRCGEQVDSVELGFTGLTDDMVLQLLPALSTLPRLTTLALNGNRLTRALLRDLTDTLKDPSKFPNVTWIDLGNNVDIFSLPQPFLLSLRKRSPKQGHLPTILELGEGPGTGEEAREGTDQQDPIGSPVTPARGQESTECVIQT.

A disordered region spans residues 1–25 (MGTRQTKGSLAERASPGAAPGPRRE). The span at 11–21 (AERASPGAAPG) shows a compositional bias: low complexity. 2 LRR repeats span residues 203 to 216 (VDSV…LTDD) and 228 to 241 (LPRL…GNRL). The tract at residues 294 to 339 (LPTILELGEGPGTGEEAREGTDQQDPIGSPVTPARGQESTECVIQT) is disordered. Residue Ser322 is modified to Phosphoserine. Position 325 is a phosphothreonine (Thr325). The segment covering 330-339 (QESTECVIQT) has biased composition (polar residues).

Belongs to the LRRC75 family.

In Mus musculus (Mouse), this protein is Leucine-rich repeat-containing protein 75A (Lrrc75a).